The following is a 103-amino-acid chain: Large ribosomal subunit protein uL24 (103 aa).

This sequence belongs to the universal ribosomal protein uL24 family. As to quaternary structure, part of the 50S ribosomal subunit.

Functionally, one of two assembly initiator proteins, it binds directly to the 5'-end of the 23S rRNA, where it nucleates assembly of the 50S subunit. Its function is as follows. One of the proteins that surrounds the polypeptide exit tunnel on the outside of the subunit. The chain is Large ribosomal subunit protein uL24 from Listeria innocua serovar 6a (strain ATCC BAA-680 / CLIP 11262).